The chain runs to 421 residues: Zinc finger protein Pegasus (421 aa).

Residues 35-55 (GDKEAETLQGAGTEGDQNGLD) form a disordered region. 3 consecutive C2H2-type zinc fingers follow at residues 82–104 (LKCR…IRIH), 110–132 (HRCH…MRSH), and 138–161 (YKCE…RRKH). The segment covering 229-238 (SMTKSSQTSG) has biased composition (polar residues). Disordered regions lie at residues 229–249 (SMTK…LMVD) and 292–358 (QPAT…PTLP). The segment covering 292–313 (QPATPAVVSSVSASIAQSSSPT) has biased composition (low complexity). Residues 339–351 (HTSTPSISNSQPS) are compositionally biased toward polar residues. 2 C2H2-type zinc fingers span residues 366–388 (HHCQ…MGCH) and 394–418 (FQCN…RGQH).

It belongs to the Ikaros C2H2-type zinc-finger protein family. In terms of assembly, probably self-associates.

The protein resides in the nucleus. Functionally, transcriptional repressor that binds the core 5'GNNTGTNG-3' DNA consensus sequence. In Gallus gallus (Chicken), this protein is Zinc finger protein Pegasus (IKZF5).